Here is a 758-residue protein sequence, read N- to C-terminus: Ferrichrome receptor FcuA (758 aa).

Positions 1-36 are cleaved as a signal peptide; sequence MNQTISSRAPQKRLAPRLLCVMIGAALGTLSASSWA. Residues 66 to 73 carry the TonB box motif; it reads DTITVVGA. The 111-residue stretch at 106 to 216 folds into the TBDR plug domain; the sequence is DARNVPFNVI…VGGMINLEPK (111 aa). The TBDR beta-barrel domain maps to 221–758; that stretch reads TPLTRVTVDY…ALKLSVSMDF (538 aa). Positions 741-758 match the TonB C-terminal box motif; it reads YIYQGDPRALKLSVSMDF.

The protein belongs to the TonB-dependent receptor family.

It is found in the cell outer membrane. In terms of biological role, receptor for the hydroxamate siderophore, ferrichrome. Binds also to most other ferrichrome derivatives except enantio ferrichrome and ferric rhodotorulate. The protein is Ferrichrome receptor FcuA (fcuA) of Yersinia enterocolitica.